The primary structure comprises 379 residues: Leukocyte elastase inhibitor A (379 aa).

The residue at position 300 (Ser300) is a Phosphoserine. The interval 351 to 379 (EFTVDHPFIFFIRHNPTSNVLFLGRVCSP) is CARD-binding motif (CBM).

The protein belongs to the serpin family. Ov-serpin subfamily. Monomer. Interacts (via C-terminus) with CASP1 and CASP4 (via CARD domain); these interactions regulate the activity of inflammatory caspases. In terms of tissue distribution, ubiquitous with higher expression in pancreas, spleen and bone marrow.

The protein resides in the secreted. The protein localises to the cytoplasm. It is found in the cytolytic granule. Its subcellular location is the early endosome. In terms of biological role, neutrophil serine protease inhibitor that plays an essential role in the regulation of the innate immune response, inflammation and cellular homeostasis. Acts primarily to protect the cell from proteases released in the cytoplasm during stress or infection. These proteases are important in killing microbes but when released from granules, these potent enzymes also destroy host proteins and contribute to mortality. Regulates the activity of the neutrophil proteases elastase, cathepsin G, proteinase-3, chymase, chymotrypsin, and kallikrein-3. Also acts as a potent intracellular inhibitor of granzyme H. During inflammation, limits the activity of inflammatory caspases CASP1 and CASP4 by suppressing their caspase-recruitment domain (CARD) oligomerization and enzymatic activation. In addition, promotes the proliferation of beta-cells when secreted. In Mus musculus (Mouse), this protein is Leukocyte elastase inhibitor A (Serpinb1a).